We begin with the raw amino-acid sequence, 393 residues long: S-adenosylmethionine synthase (393 aa).

Glu-9 contacts Mg(2+). His-15 lines the ATP pocket. Position 43 (Glu-43) interacts with K(+). Residues Glu-56 and Gln-99 each coordinate L-methionine. Residues 167–169 (DGK), 235–238 (SGRF), Asp-246, 252–253 (RK), Ala-269, Lys-273, and Lys-277 each bind ATP. Asp-246 lines the L-methionine pocket. Lys-277 contributes to the L-methionine binding site.

Belongs to the AdoMet synthase family. Homotetramer. The cofactor is Mn(2+). Mg(2+) serves as cofactor. It depends on Co(2+) as a cofactor. Requires K(+) as cofactor.

Its subcellular location is the cytoplasm. It carries out the reaction L-methionine + ATP + H2O = S-adenosyl-L-methionine + phosphate + diphosphate. It participates in amino-acid biosynthesis; S-adenosyl-L-methionine biosynthesis; S-adenosyl-L-methionine from L-methionine: step 1/1. Functionally, catalyzes the formation of S-adenosylmethionine from methionine and ATP. The reaction comprises two steps that are both catalyzed by the same enzyme: formation of S-adenosylmethionine (AdoMet) and triphosphate, and subsequent hydrolysis of the triphosphate. The chain is S-adenosylmethionine synthase (SAMS) from Litchi chinensis (Lychee).